Here is a 190-residue protein sequence, read N- to C-terminus: Holliday junction branch migration complex subunit RuvA (190 aa).

The interval 1–64 (MIGKLTGTLL…EDAQLLYGFG (64 aa)) is domain I. Positions 65–137 (TAQERQAFRE…LKGKLGADVG (73 aa)) are domain II. The tract at residues 137-141 (GVRAH) is flexible linker. A domain III region spans residues 142-190 (AANDNQADILQALLALGYNDKEAAAALKALPADVGVSEGIKLALKSLSK).

This sequence belongs to the RuvA family. In terms of assembly, homotetramer. Forms an RuvA(8)-RuvB(12)-Holliday junction (HJ) complex. HJ DNA is sandwiched between 2 RuvA tetramers; dsDNA enters through RuvA and exits via RuvB. An RuvB hexamer assembles on each DNA strand where it exits the tetramer. Each RuvB hexamer is contacted by two RuvA subunits (via domain III) on 2 adjacent RuvB subunits; this complex drives branch migration. In the full resolvosome a probable DNA-RuvA(4)-RuvB(12)-RuvC(2) complex forms which resolves the HJ.

It localises to the cytoplasm. In terms of biological role, the RuvA-RuvB-RuvC complex processes Holliday junction (HJ) DNA during genetic recombination and DNA repair, while the RuvA-RuvB complex plays an important role in the rescue of blocked DNA replication forks via replication fork reversal (RFR). RuvA specifically binds to HJ cruciform DNA, conferring on it an open structure. The RuvB hexamer acts as an ATP-dependent pump, pulling dsDNA into and through the RuvAB complex. HJ branch migration allows RuvC to scan DNA until it finds its consensus sequence, where it cleaves and resolves the cruciform DNA. This Acidovorax sp. (strain JS42) protein is Holliday junction branch migration complex subunit RuvA.